Reading from the N-terminus, the 490-residue chain is 53 kDa membrane antigen A (490 aa).

A signal peptide spans 1–16; it reads MKKKLFFALLVLILSS. Cys17 is lipidated: N-palmitoyl cysteine. The S-diacylglycerol cysteine moiety is linked to residue Cys17.

It is found in the cell membrane. This chain is 53 kDa membrane antigen A (tdpA), found in Treponema denticola.